The chain runs to 126 residues: DNA-directed RNA polymerase I subunit RPA12 (126 aa).

6 residues coordinate Zn(2+): Cys-20, Cys-23, Cys-38, Cys-41, Cys-87, and Cys-90. The C4-type zinc-finger motif lies at 20-41 (CSDCGSVLPLPGAQDTVTCTRC). The TFIIS-type zinc finger occupies 83-123 (VDRRCPRCGHEGMAYHTRQMRSADEGQTVFYTCTNCKFQEK). Residues 106–107 (DE) carry the Hairpin motif. Residues Cys-115 and Cys-118 each contribute to the Zn(2+) site.

It belongs to the archaeal RpoM/eukaryotic RPA12/RPB9/RPC11 RNA polymerase family. In terms of assembly, component of the RNA polymerase I (Pol I) complex consisting of 13 subunits: a ten-subunit catalytic core composed of POLR1A/RPA1, POLR1B/RPA2, POLR1C/RPAC1, POLR1D/RPAC2, POLR1H/RPA12, POLR2E/RPABC1, POLR2F/RPABC2, POLR2H/RPABC3, POLR2K/RPABC4 and POLR2L/RPABC5; a mobile stalk subunit POLR1F/RPA43 protruding from the core and additional subunits homologous to general transcription factors POLR1E/RPA49 and POLR1G/RPA34. Part of Pol I pre-initiation complex (PIC), in which Pol I core assembles with RRN3 and promoter-bound UTBF and SL1/TIF-IB complex.

It is found in the nucleus. The protein localises to the nucleolus. Functionally, core component of RNA polymerase I (Pol I), a DNA-dependent RNA polymerase which synthesizes ribosomal RNA precursors using the four ribonucleoside triphosphates as substrates. Can mediate Pol I proofreading of the nascent RNA transcript. Anchors into the Pol I active site to monitor transcription fidelity and cleave mis-incorporated 5'-ribonucleotides. The chain is DNA-directed RNA polymerase I subunit RPA12 from Macaca mulatta (Rhesus macaque).